The chain runs to 1365 residues: Killer toxin-resistance protein 5 (1365 aa).

Residues 1-17 (MRLLALVLLLLCAPLRA) form the signal peptide. N-linked (GlcNAc...) asparagine glycans are attached at residues N115, N228, N293, N457, N519, N523, N644, N870, N1091, N1150, and N1195. The interval 1334–1365 (FASSPGDEDVPGESVSSKYQDSDNAAPLHDEL) is disordered. The span at 1347–1356 (SVSSKYQDSD) shows a compositional bias: polar residues. Positions 1362–1365 (HDEL) match the Prevents secretion from ER motif.

The protein to D.melanogaster UGGG.

It localises to the endoplasmic reticulum lumen. Required for (1-&gt;6)-beta-D-glucan synthesis and normal cell growth. This is Killer toxin-resistance protein 5 (KRE5) from Saccharomyces cerevisiae (strain ATCC 204508 / S288c) (Baker's yeast).